We begin with the raw amino-acid sequence, 471 residues long: Argininosuccinate lyase (471 aa).

Belongs to the lyase 1 family. Argininosuccinate lyase subfamily.

It is found in the cytoplasm. It carries out the reaction 2-(N(omega)-L-arginino)succinate = fumarate + L-arginine. It participates in amino-acid biosynthesis; L-arginine biosynthesis; L-arginine from L-ornithine and carbamoyl phosphate: step 3/3. The protein is Argininosuccinate lyase of Cereibacter sphaeroides (strain ATCC 17025 / ATH 2.4.3) (Rhodobacter sphaeroides).